Consider the following 893-residue polypeptide: Flippase kinase 1 (893 aa).

Positions methionine 1 to leucine 23 are enriched in basic and acidic residues. 3 disordered regions span residues methionine 1–leucine 124, proline 129–proline 148, and glutamine 163–glycine 243. Polar residues predominate over residues glutamine 24–leucine 42. Over residues asparagine 49–asparagine 62 the composition is skewed to low complexity. Residues asparagine 76–phenylalanine 87 show a composition bias toward polar residues. Residues serine 96–serine 122 are compositionally biased toward low complexity. Residues serine 140, serine 144, serine 171, serine 175, and serine 185 each carry the phosphoserine modification. The span at serine 206–serine 216 shows a compositional bias: low complexity. The span at glycine 228–proline 237 shows a compositional bias: polar residues. Serine 300 is subject to Phosphoserine. The segment covering aspartate 334–proline 355 has biased composition (polar residues). The segment at aspartate 334–lysine 480 is disordered. Positions asparagine 370 to glutamine 380 are enriched in basic and acidic residues. Positions glutamine 381–lysine 399 are enriched in polar residues. Position 414 is a phosphoserine (serine 414). Positions alanine 422–serine 439 are enriched in low complexity. Position 462 is a phosphoserine (serine 462). The Protein kinase domain occupies phenylalanine 496–phenylalanine 777. Residues leucine 502 to valine 510 and lysine 525 each bind ATP. Catalysis depends on aspartate 621, which acts as the Proton acceptor. In terms of domain architecture, AGC-kinase C-terminal spans lysine 778–serine 861. Residues alanine 874–arginine 893 form a disordered region. Positions serine 884 to arginine 893 are enriched in basic residues.

Belongs to the protein kinase superfamily. Ser/Thr protein kinase family. KIN82 subfamily. The N-terminal non-catalytic domain is phosphorylated by YPK1.

It is found in the cytoplasm. Its subcellular location is the cell membrane. It catalyses the reaction L-seryl-[protein] + ATP = O-phospho-L-seryl-[protein] + ADP + H(+). The catalysed reaction is L-threonyl-[protein] + ATP = O-phospho-L-threonyl-[protein] + ADP + H(+). Down-regulated by YKP1 phosphorylation. This effect is counteracted in the presence of mannosyl-inositolphosphorylceramide (MIPC). Functionally, flippase activator that phosphorylates DNF1 and DNF2 and which is involved in the generation of phospholipid asymmetry in membranes by the inward translocation of phospholipids and in the retrieval pathway from early endosomes to the trans-Golgi network (TGN). Also phosphorylates the N-terminal half of YPK1. Involved in pheromone-response. The chain is Flippase kinase 1 (FPK1) from Saccharomyces cerevisiae (strain ATCC 204508 / S288c) (Baker's yeast).